A 274-amino-acid polypeptide reads, in one-letter code: Large ribosomal subunit protein uL2 (274 aa).

Residues valine 195–lysine 274 are disordered. 2 stretches are compositionally biased toward basic residues: residues glycine 209–asparagine 220 and proline 244–serine 264.

It belongs to the universal ribosomal protein uL2 family. In terms of assembly, part of the 50S ribosomal subunit. Forms a bridge to the 30S subunit in the 70S ribosome.

Functionally, one of the primary rRNA binding proteins. Required for association of the 30S and 50S subunits to form the 70S ribosome, for tRNA binding and peptide bond formation. It has been suggested to have peptidyltransferase activity; this is somewhat controversial. Makes several contacts with the 16S rRNA in the 70S ribosome. This Bacteroides fragilis (strain ATCC 25285 / DSM 2151 / CCUG 4856 / JCM 11019 / LMG 10263 / NCTC 9343 / Onslow / VPI 2553 / EN-2) protein is Large ribosomal subunit protein uL2.